The sequence spans 310 residues: Porphobilinogen deaminase (310 aa).

Cysteine 242 bears the S-(dipyrrolylmethanemethyl)cysteine mark.

Belongs to the HMBS family. As to quaternary structure, monomer. Dipyrromethane serves as cofactor.

It carries out the reaction 4 porphobilinogen + H2O = hydroxymethylbilane + 4 NH4(+). It functions in the pathway porphyrin-containing compound metabolism; protoporphyrin-IX biosynthesis; coproporphyrinogen-III from 5-aminolevulinate: step 2/4. In terms of biological role, tetrapolymerization of the monopyrrole PBG into the hydroxymethylbilane pre-uroporphyrinogen in several discrete steps. This chain is Porphobilinogen deaminase, found in Shewanella pealeana (strain ATCC 700345 / ANG-SQ1).